A 372-amino-acid polypeptide reads, in one-letter code: MPNQHTLLSSNLLPVGSNISTWWNFGSMLLTCLALQTSTGFFLAIHYTANINLAFSSVIHILRDVPNGWIIQNLHAIGASMFFICIYTHIARGLYYGSYLNKEVWLSGTMLLIMLMATSFFGYVLPWGQMSFWAATVITNLLTAIPYLGTILTTWLWGGFSIDNPTLTRFFALHFILPFMIISLSSIHIILLHSEGSNNPLGTNPDTDKIPFHPYHSYKDTLMITAMITSMLIIMSFMPNLFNDPENFSKANPLVTPQHIKPEWYFLFAYGILRSIPNKLGGTLALLMSILILTTAPFTHTSYTRSMTFRPLTQIMFWTLIVTFITITWSATKPVEPPFIFISQTASIIYFSFFIINPLLGWVENKIMMTNN.

4 consecutive transmembrane segments (helical) span residues 25-45 (FGSM…FLAI), 69-90 (WIIQ…YTHI), 105-125 (WLSG…GYVL), and 170-190 (FFAL…IHII). Heme b contacts are provided by His75 and His89. Heme b is bound by residues His174 and His188. An a ubiquinone-binding site is contributed by His193. 4 consecutive transmembrane segments (helical) span residues 218-238 (YKDT…MSFM), 280-300 (LGGT…PFTH), 312-332 (LTQI…WSAT), and 339-358 (FIFI…IINP).

Belongs to the cytochrome b family. The cytochrome bc1 complex contains 3 respiratory subunits (MT-CYB, CYC1 and UQCRFS1), 2 core proteins (UQCRC1 and UQCRC2) and probably 6 low-molecular weight proteins. The cofactor is heme b.

Its subcellular location is the mitochondrion inner membrane. Component of the ubiquinol-cytochrome c reductase complex (complex III or cytochrome b-c1 complex) that is part of the mitochondrial respiratory chain. The b-c1 complex mediates electron transfer from ubiquinol to cytochrome c. Contributes to the generation of a proton gradient across the mitochondrial membrane that is then used for ATP synthesis. The polypeptide is Cytochrome b (MT-CYB) (Hydrophis semperi (Lake Taal snake)).